The following is a 171-amino-acid chain: Lipoprotein signal peptidase (171 aa).

The next 4 helical transmembrane spans lie at 15 to 35 (WLWLALLVFIADITIKLIVMD), 47 to 67 (VLPFFNLLYVHNYGAAFSFLS), 72 to 92 (WQRWLFTGIAFVVTGMLAYWM), and 107 to 127 (ALIIGGAVGNVFDRIVHGFVV). Active-site residues include Asp-128 and Asp-146. A helical transmembrane segment spans residues 141–161 (AFNLADSTICIGAAMIILDGF).

It belongs to the peptidase A8 family.

It localises to the cell inner membrane. The catalysed reaction is Release of signal peptides from bacterial membrane prolipoproteins. Hydrolyzes -Xaa-Yaa-Zaa-|-(S,diacylglyceryl)Cys-, in which Xaa is hydrophobic (preferably Leu), and Yaa (Ala or Ser) and Zaa (Gly or Ala) have small, neutral side chains.. It participates in protein modification; lipoprotein biosynthesis (signal peptide cleavage). Its function is as follows. This protein specifically catalyzes the removal of signal peptides from prolipoproteins. In Vibrio cholerae serotype O1 (strain ATCC 39541 / Classical Ogawa 395 / O395), this protein is Lipoprotein signal peptidase.